We begin with the raw amino-acid sequence, 644 residues long: Chaperone protein DnaK (644 aa).

Threonine 199 carries the post-translational modification Phosphothreonine; by autocatalysis. Residues 602–644 form a disordered region; the sequence is IYAKKSSEGQTAQGQTQSQESTKPAEEGVVDAEFEEVKEEDKK. A compositionally biased stretch (polar residues) spans 609–623; it reads EGQTAQGQTQSQEST. A compositionally biased stretch (acidic residues) spans 629–644; that stretch reads GVVDAEFEEVKEEDKK.

The protein belongs to the heat shock protein 70 family.

In terms of biological role, acts as a chaperone. In Legionella pneumophila (strain Lens), this protein is Chaperone protein DnaK.